Reading from the N-terminus, the 120-residue chain is Small ribosomal subunit protein bS16 (120 aa).

Residues 84–120 (KRESRNNPQQGQPKKKAQERAAAAAAAAEKAASEAAA) are disordered. Low complexity predominate over residues 103–120 (RAAAAAAAAEKAASEAAA).

Belongs to the bacterial ribosomal protein bS16 family.

The polypeptide is Small ribosomal subunit protein bS16 (Beijerinckia indica subsp. indica (strain ATCC 9039 / DSM 1715 / NCIMB 8712)).